The chain runs to 184 residues: Tumor necrosis factor alpha-induced protein 8-like protein 2 (184 aa).

Ser3 carries the post-translational modification Phosphoserine.

It belongs to the TNFAIP8 family. TNFAIP8L2 subfamily. May interact with CASP8; however, such result is unclear since could not reproduce the interaction with CASP8. Interacts with RAC1. Phosphorylated by TAK1/MAP3K7; this phosphorylation triggers association with BTRC and subsequent ubiquitination and degradation. Post-translationally, ubiquitinated in a BTRC-depdent manner; leading to degradation mediated through the proteasome pathway.

Its subcellular location is the cytoplasm. It is found in the nucleus. It localises to the lysosome. Acts as a negative regulator of innate and adaptive immunity by maintaining immune homeostasis. Plays a regulatory role in the Toll-like signaling pathway by determining the strength of LPS-induced signaling and gene expression. Inhibits TCR-mediated T-cell activation and negatively regulate T-cell function to prevent hyperresponsiveness. Also inhibits autolysosome formation via negatively modulating MTOR activation by interacting with RAC1 and promoting the disassociation of the RAC1-MTOR complex. Plays an essential role in NK-cell biology by acting as a checkpoint and displaying an expression pattern correlating with NK-cell maturation process and by negatively regulating NK-cell maturation and antitumor immunity. Mechanistically, suppresses IL-15-triggered mTOR activity in NK-cells. This chain is Tumor necrosis factor alpha-induced protein 8-like protein 2 (TNFAIP8L2), found in Oryctolagus cuniculus (Rabbit).